The chain runs to 1025 residues: Multidrug resistance protein MdtC (1025 aa).

Helical transmembrane passes span 3–23 (FFALFIYRPVATILLSVAITL), 333–353 (EVEQTLIISVALVILVVFLFL), 360–380 (IIPAVSVPVSLIGTFAAMYLC), 387–407 (LSLMALTIATGFVVDDAIVVL), 431–451 (VGFTVLSMSLSLVAVFLPLLL), 469–489 (VAIGISLLVSLTLTPMMCGWM), 528–548 (LVGVVLLGTIALNIWLYISIP), 853–873 (VILIIAAIATVYIVLGILYES), 875–895 (VHPLTILSTLPSAGVGALLAL), 897–917 (LFNAPFSLIALIGIMLLIGIV), 953–973 (PIMMTTLAALFGALPLVLSGG), and 984–1004 (ITIVGGLVMSQLLTLYTTPVV).

This sequence belongs to the resistance-nodulation-cell division (RND) (TC 2.A.6) family. MdtC subfamily. As to quaternary structure, part of a tripartite efflux system composed of MdtA, MdtB and MdtC. MdtC forms a heteromultimer with MdtB.

The protein localises to the cell inner membrane. Its function is as follows. The MdtABC tripartite complex confers resistance against novobiocin and deoxycholate. The protein is Multidrug resistance protein MdtC of Escherichia coli O9:H4 (strain HS).